Here is a 537-residue protein sequence, read N- to C-terminus: Oviduct-specific glycoprotein (537 aa).

Residues 1-18 form the signal peptide; sequence LLLCVGLLLVLKHHDGAA. One can recognise a GH18 domain in the interval 19–382; sequence HKLVCYFTNW…HTLNNLLVND (364 aa). Residues C23 and C48 are joined by a disulfide bond. Residues 68–69, 95–98, Y139, 208–211, and W352 contribute to the chitin site; these read PQ, GGWN, and LSYD. A glycan (N-linked (GlcNAc...) asparagine) is linked at N399. 2 disordered regions span residues 446–475 and 498–537; these read EIAT…GEKP and TGQK…ERRL. Positions 528–537 are enriched in basic and acidic residues; it reads GRAETLERRL.

The protein belongs to the glycosyl hydrolase 18 family. In terms of tissue distribution, oviduct.

The protein localises to the cytoplasmic vesicle. The protein resides in the secretory vesicle. Functionally, binds to oocyte zona pellucida in vivo. May play a role in the fertilization process and/or early embryonic development. The sequence is that of Oviduct-specific glycoprotein (OVGP1) from Bos taurus (Bovine).